Consider the following 434-residue polypeptide: Asparagine--tRNA ligase (434 aa).

This sequence belongs to the class-II aminoacyl-tRNA synthetase family.

The protein localises to the cytoplasm. The catalysed reaction is tRNA(Asn) + L-asparagine + ATP = L-asparaginyl-tRNA(Asn) + AMP + diphosphate + H(+). The protein is Asparagine--tRNA ligase of Pyrococcus horikoshii (strain ATCC 700860 / DSM 12428 / JCM 9974 / NBRC 100139 / OT-3).